The primary structure comprises 154 residues: 6,7-dimethyl-8-ribityllumazine synthase (154 aa).

5-amino-6-(D-ribitylamino)uracil is bound by residues phenylalanine 26, 60 to 62, and 84 to 86; these read ALE and CII. 89-90 contributes to the (2S)-2-hydroxy-3-oxobutyl phosphate binding site; that stretch reads QT. The active-site Proton donor is the histidine 92. Residue asparagine 117 coordinates 5-amino-6-(D-ribitylamino)uracil. Residue arginine 131 coordinates (2S)-2-hydroxy-3-oxobutyl phosphate.

Belongs to the DMRL synthase family.

It carries out the reaction (2S)-2-hydroxy-3-oxobutyl phosphate + 5-amino-6-(D-ribitylamino)uracil = 6,7-dimethyl-8-(1-D-ribityl)lumazine + phosphate + 2 H2O + H(+). Its pathway is cofactor biosynthesis; riboflavin biosynthesis; riboflavin from 2-hydroxy-3-oxobutyl phosphate and 5-amino-6-(D-ribitylamino)uracil: step 1/2. Catalyzes the formation of 6,7-dimethyl-8-ribityllumazine by condensation of 5-amino-6-(D-ribitylamino)uracil with 3,4-dihydroxy-2-butanone 4-phosphate. This is the penultimate step in the biosynthesis of riboflavin. The sequence is that of 6,7-dimethyl-8-ribityllumazine synthase from Verminephrobacter eiseniae (strain EF01-2).